Here is a 235-residue protein sequence, read N- to C-terminus: Proteasome subunit alpha (235 aa).

It belongs to the peptidase T1A family. As to quaternary structure, the 20S proteasome core is composed of 14 alpha and 14 beta subunits that assemble into four stacked heptameric rings, resulting in a barrel-shaped structure. The two inner rings, each composed of seven catalytic beta subunits, are sandwiched by two outer rings, each composed of seven alpha subunits. The catalytic chamber with the active sites is on the inside of the barrel. Has a gated structure, the ends of the cylinder being occluded by the N-termini of the alpha-subunits. Is capped by the proteasome-associated ATPase, ARC.

The protein resides in the cytoplasm. The protein operates within protein degradation; proteasomal Pup-dependent pathway. With respect to regulation, the formation of the proteasomal ATPase ARC-20S proteasome complex, likely via the docking of the C-termini of ARC into the intersubunit pockets in the alpha-rings, may trigger opening of the gate for substrate entry. Interconversion between the open-gate and close-gate conformations leads to a dynamic regulation of the 20S proteasome proteolysis activity. Its function is as follows. Component of the proteasome core, a large protease complex with broad specificity involved in protein degradation. The protein is Proteasome subunit alpha of Paenarthrobacter aurescens (strain TC1).